The chain runs to 192 residues: Ion-translocating oxidoreductase complex subunit A (192 aa).

Helical transmembrane passes span 5–25 (ILLI…FLGL), 39–59 (IGMS…AYLI), 63–83 (ILTP…VIAV), 102–122 (LLGI…VALL), 134–154 (VIYG…FAAL), and 171–191 (SIAL…TGLV).

The protein belongs to the NqrDE/RnfAE family. In terms of assembly, the complex is composed of six subunits: RnfA, RnfB, RnfC, RnfD, RnfE and RnfG.

Its subcellular location is the cell inner membrane. Functionally, part of a membrane-bound complex that couples electron transfer with translocation of ions across the membrane. In Pasteurella multocida (strain Pm70), this protein is Ion-translocating oxidoreductase complex subunit A.